The sequence spans 195 residues: Imidazoleglycerol-phosphate dehydratase (195 aa).

This sequence belongs to the imidazoleglycerol-phosphate dehydratase family.

The protein localises to the cytoplasm. The enzyme catalyses D-erythro-1-(imidazol-4-yl)glycerol 3-phosphate = 3-(imidazol-4-yl)-2-oxopropyl phosphate + H2O. It functions in the pathway amino-acid biosynthesis; L-histidine biosynthesis; L-histidine from 5-phospho-alpha-D-ribose 1-diphosphate: step 6/9. This Thermotoga petrophila (strain ATCC BAA-488 / DSM 13995 / JCM 10881 / RKU-1) protein is Imidazoleglycerol-phosphate dehydratase.